Consider the following 104-residue polypeptide: L-rhamnose mutarotase (104 aa).

Position 18 (Y18) interacts with substrate. Residue H22 is the Proton donor of the active site. Residues Y41 and 76–77 (WW) each bind substrate. Positions 85 to 104 (PSNPDNSPISDALDPVFYLD) are disordered.

This sequence belongs to the rhamnose mutarotase family. Homodimer.

The protein resides in the cytoplasm. The enzyme catalyses alpha-L-rhamnose = beta-L-rhamnose. It functions in the pathway carbohydrate metabolism; L-rhamnose metabolism. Involved in the anomeric conversion of L-rhamnose. The protein is L-rhamnose mutarotase of Pectobacterium atrosepticum (strain SCRI 1043 / ATCC BAA-672) (Erwinia carotovora subsp. atroseptica).